We begin with the raw amino-acid sequence, 379 residues long: Chaperone protein DnaJ (379 aa).

A J domain is found at 5 to 70; it reads DYYEILGVSK…QKRAAYDQYG (66 aa). A CR-type zinc finger spans residues 134–212; it reads GVTKEIRIPT…CHGHGRVEKS (79 aa). 8 residues coordinate Zn(2+): Cys147, Cys150, Cys164, Cys167, Cys186, Cys189, Cys200, and Cys203. CXXCXGXG motif repeat units follow at residues 147-154, 164-171, 186-193, and 200-207; these read CDVCHGSG, CPTCHGSG, CPHCQGRG, and CHKCHGHG.

It belongs to the DnaJ family. In terms of assembly, homodimer. Zn(2+) is required as a cofactor.

Its subcellular location is the cytoplasm. In terms of biological role, participates actively in the response to hyperosmotic and heat shock by preventing the aggregation of stress-denatured proteins and by disaggregating proteins, also in an autonomous, DnaK-independent fashion. Unfolded proteins bind initially to DnaJ; upon interaction with the DnaJ-bound protein, DnaK hydrolyzes its bound ATP, resulting in the formation of a stable complex. GrpE releases ADP from DnaK; ATP binding to DnaK triggers the release of the substrate protein, thus completing the reaction cycle. Several rounds of ATP-dependent interactions between DnaJ, DnaK and GrpE are required for fully efficient folding. Also involved, together with DnaK and GrpE, in the DNA replication of plasmids through activation of initiation proteins. The chain is Chaperone protein DnaJ from Salmonella agona (strain SL483).